Reading from the N-terminus, the 215-residue chain is MSKVYDWFEERLEIQTIADDITSKYVPPHVNIFYCLGGITLTCFLVQVATGFAMTFYYRPTVTEAFASVQYIMTEANFGWLIRSVHRWSASMMVLMMILHVFRVYLTGGFKKPRELTWVTGVVLGVLTASFGVTGYSLPWDQIGYWAVKIVTGVPEAIPVIGSPLVELLRGSASVGQSTLTRFYSLHTFVLPLLTAVFMLMHFPMIRKQGISGPL.

The helical transmembrane segment at 32 to 52 (IFYCLGGITLTCFLVQVATGF) threads the bilayer. Heme c is bound at residue cysteine 35. The heme b site is built by histidine 86 and histidine 100. Helical transmembrane passes span 90–110 (ASMM…TGGF), 116–136 (LTWV…VTGY), and 186–206 (LHTF…FPMI). Histidine 187 and histidine 202 together coordinate heme b.

The protein belongs to the cytochrome b family. PetB subfamily. The 4 large subunits of the cytochrome b6-f complex are cytochrome b6, subunit IV (17 kDa polypeptide, PetD), cytochrome f and the Rieske protein, while the 4 small subunits are PetG, PetL, PetM and PetN. The complex functions as a dimer. Heme b serves as cofactor. Heme c is required as a cofactor.

The protein resides in the plastid. Its subcellular location is the chloroplast thylakoid membrane. Functionally, component of the cytochrome b6-f complex, which mediates electron transfer between photosystem II (PSII) and photosystem I (PSI), cyclic electron flow around PSI, and state transitions. This chain is Cytochrome b6, found in Populus alba (White poplar).